The chain runs to 1220 residues: DNA-directed RNA polymerase subunit beta (1220 aa).

The protein belongs to the RNA polymerase beta chain family. In terms of assembly, the RNAP catalytic core consists of 2 alpha, 1 beta, 1 beta' and 1 omega subunit. When a sigma factor is associated with the core the holoenzyme is formed, which can initiate transcription.

It carries out the reaction RNA(n) + a ribonucleoside 5'-triphosphate = RNA(n+1) + diphosphate. Its function is as follows. DNA-dependent RNA polymerase catalyzes the transcription of DNA into RNA using the four ribonucleoside triphosphates as substrates. In Mesomycoplasma hyopneumoniae (strain 7448) (Mycoplasma hyopneumoniae), this protein is DNA-directed RNA polymerase subunit beta.